Reading from the N-terminus, the 1471-residue chain is Gag-Pol polyprotein (1471 aa).

The N-myristoyl glycine; by host moiety is linked to residue G2. The segment at 7 to 31 is interaction with Gp41; sequence VLSGKKTDELEKVRLRPGGKKRYCL. The Nuclear export signal signature appears at 16–22; that stretch reads LEKVRLR. The Nuclear localization signal motif lies at 26–32; that stretch reads KKRYCLK. Residues 105–114 show a composition bias toward basic and acidic residues; that stretch reads QRHLAADTEK. Residues 105-130 form a disordered region; it reads QRHLAADTEKMPATSRPTAPPSGGNY. Y130 carries the post-translational modification Phosphotyrosine; by host. Positions 186-223 are interaction with human PPIA/CYPA and NUP153; the sequence is NCVGDHQAAMQIIREIINEEAADWDQQHPIPGPLPAGQ. A dimerization/Multimerization of capsid protein p24 region spans residues 274–360; the sequence is YNPTNILDIK…GGPGQKARLM (87 aa). CCHC-type zinc fingers lie at residues 388 to 405 and 409 to 426; these read VTCW…QCRA and QGCW…KCPE. The tract at residues 441–508 is disordered; the sequence is ASQLPHDPSA…PRETLQGGDR (68 aa). Basic and acidic residues predominate over residues 484–501; it reads DAEKLHEDGETAEREPRE. Residues 513-517 form a dimerization of protease region; it reads PQFSL. In terms of domain architecture, Peptidase A2 spans 533–602; the sequence is EVLLDTGADD…PINIFGRNIL (70 aa). Residue D537 is the For protease activity; shared with dimeric partner of the active site. Dimerization of protease regions lie at residues 561–567 and 600–612; these read GIGGFIN and NILN…LNFP. The Reverse transcriptase domain occupies 656–846; the sequence is GQLEEAPPTN…PFKWMGYELW (191 aa). Mg(2+) contacts are provided by D721, D796, and D797. Positions 838-846 are RT 'primer grip'; it reads FKWMGYELW. The Tryptophan repeat motif signature appears at 1008–1024; sequence WDQWWTDYWQVTWIPEW. The RNase H type-1 domain occupies 1044–1167; sequence LEKVETYYTD…VDHLVSQGIR (124 aa). Residues D1053, E1088, D1108, and D1159 each coordinate Mg(2+). An Integrase-type zinc finger spans residues 1173–1214; it reads EKIEPAQEEHEKYHGNVKELVHKFGLPQLVAKQIVNSCDKCQ. Positions 1182, 1186, 1210, and 1213 each coordinate Zn(2+). The region spanning 1224–1375 is the Integrase catalytic domain; it reads VNAELGTWQM…PAERLVNMIT (152 aa). Mg(2+) contacts are provided by D1234, D1286, and E1322. The integrase-type DNA-binding region spans 1393–1440; that stretch reads FQVYYREGRDQLWKGPGELLWKGEGAVLIKVGTEIKVIPRRKAKIIRH.

In terms of assembly, homotrimer; further assembles as hexamers of trimers. Interacts with gp41 (via C-terminus). Interacts with host CALM1; this interaction induces a conformational change in the Matrix protein, triggering exposure of the myristate group. Interacts with host AP3D1; this interaction allows the polyprotein trafficking to multivesicular bodies during virus assembly. Part of the pre-integration complex (PIC) which is composed of viral genome, matrix protein, Vpr and integrase. Homodimer; the homodimer further multimerizes as homohexamers or homopentamers. Interacts with human PPIA/CYPA. Interacts with human NUP153. Interacts with host PDZD8; this interaction stabilizes the capsid. Interacts with monkey TRIM5; this interaction destabilizes the capsid. As to quaternary structure, homodimer, whose active site consists of two apposed aspartic acid residues. In terms of assembly, heterodimer of p66 RT and p51 RT (RT p66/p51). Heterodimerization of RT is essential for DNA polymerase activity. The overall folding of the subdomains is similar in p66 RT and p51 RT but the spatial arrangements of the subdomains are dramatically different. Homotetramer; may further associate as a homohexadecamer. Part of the pre-integration complex (PIC) which is composed of viral genome, matrix protein, Vpr and integrase. Interacts with human SMARCB1/INI1 and human PSIP1/LEDGF isoform 1. Interacts with human KPNA3; this interaction might play a role in nuclear import of the pre-integration complex. Interacts with human NUP153; this interaction might play a role in nuclear import of the pre-integration complex. It depends on Mg(2+) as a cofactor. In terms of processing, specific enzymatic cleavages by the viral protease yield mature proteins. The protease is released by autocatalytic cleavage. The polyprotein is cleaved during and after budding, this process is termed maturation. Proteolytic cleavage of p66 RT removes the RNase H domain to yield the p51 RT subunit. Nucleocapsid protein p7 might be further cleaved after virus entry.

Its subcellular location is the host cell membrane. The protein resides in the host endosome. The protein localises to the host multivesicular body. It is found in the virion membrane. It localises to the host nucleus. Its subcellular location is the host cytoplasm. The protein resides in the virion. The catalysed reaction is Endopeptidase for which the P1 residue is preferably hydrophobic.. The enzyme catalyses Endohydrolysis of RNA in RNA/DNA hybrids. Three different cleavage modes: 1. sequence-specific internal cleavage of RNA. Human immunodeficiency virus type 1 and Moloney murine leukemia virus enzymes prefer to cleave the RNA strand one nucleotide away from the RNA-DNA junction. 2. RNA 5'-end directed cleavage 13-19 nucleotides from the RNA end. 3. DNA 3'-end directed cleavage 15-20 nucleotides away from the primer terminus.. It catalyses the reaction 3'-end directed exonucleolytic cleavage of viral RNA-DNA hybrid.. It carries out the reaction DNA(n) + a 2'-deoxyribonucleoside 5'-triphosphate = DNA(n+1) + diphosphate. With respect to regulation, protease: The viral protease is inhibited by many synthetic protease inhibitors (PIs), such as amprenavir, atazanavir, indinavir, loprinavir, nelfinavir, ritonavir and saquinavir. Use of protease inhibitors in tritherapy regimens permit more ambitious therapeutic strategies. Reverse transcriptase/ribonuclease H: RT can be inhibited either by nucleoside RT inhibitors (NRTIs) or by non nucleoside RT inhibitors (NNRTIs). NRTIs act as chain terminators, whereas NNRTIs inhibit DNA polymerization by binding a small hydrophobic pocket near the RT active site and inducing an allosteric change in this region. Classical NRTIs are abacavir, adefovir (PMEA), didanosine (ddI), lamivudine (3TC), stavudine (d4T), tenofovir (PMPA), zalcitabine (ddC), and zidovudine (AZT). Classical NNRTIs are atevirdine (BHAP U-87201E), delavirdine, efavirenz (DMP-266), emivirine (I-EBU), and nevirapine (BI-RG-587). The tritherapies used as a basic effective treatment of AIDS associate two NRTIs and one NNRTI. Its function is as follows. Mediates, with Gag polyprotein, the essential events in virion assembly, including binding the plasma membrane, making the protein-protein interactions necessary to create spherical particles, recruiting the viral Env proteins, and packaging the genomic RNA via direct interactions with the RNA packaging sequence (Psi). Gag-Pol polyprotein may regulate its own translation, by the binding genomic RNA in the 5'-UTR. At low concentration, the polyprotein would promote translation, whereas at high concentration, the polyprotein would encapsidate genomic RNA and then shut off translation. Targets the polyprotein to the plasma membrane via a multipartite membrane-binding signal, that includes its myristoylated N-terminus. Matrix protein is part of the pre-integration complex. Implicated in the release from host cell mediated by Vpu. Binds to RNA. In terms of biological role, forms the conical core that encapsulates the genomic RNA-nucleocapsid complex in the virion. Most core are conical, with only 7% tubular. The core is constituted by capsid protein hexamer subunits. The core is disassembled soon after virion entry. Host restriction factors such as TRIM5-alpha or TRIMCyp bind retroviral capsids and cause premature capsid disassembly, leading to blocks in reverse transcription. Capsid restriction by TRIM5 is one of the factors which restricts HIV-1 to the human species. Host PIN1 apparently facilitates the virion uncoating. On the other hand, interactions with PDZD8 or CYPA stabilize the capsid. Functionally, encapsulates and protects viral dimeric unspliced genomic RNA (gRNA). Binds these RNAs through its zinc fingers. Acts as a nucleic acid chaperone which is involved in rearangement of nucleic acid secondary structure during gRNA retrotranscription. Also facilitates template switch leading to recombination. As part of the polyprotein, participates in gRNA dimerization, packaging, tRNA incorporation and virion assembly. Its function is as follows. Aspartyl protease that mediates proteolytic cleavages of Gag and Gag-Pol polyproteins during or shortly after the release of the virion from the plasma membrane. Cleavages take place as an ordered, step-wise cascade to yield mature proteins. This process is called maturation. Displays maximal activity during the budding process just prior to particle release from the cell. Also cleaves Nef and Vif, probably concomitantly with viral structural proteins on maturation of virus particles. Hydrolyzes host EIF4GI and PABP1 in order to shut off the capped cellular mRNA translation. The resulting inhibition of cellular protein synthesis serves to ensure maximal viral gene expression and to evade host immune response. Multifunctional enzyme that converts the viral RNA genome into dsDNA in the cytoplasm, shortly after virus entry into the cell. This enzyme displays a DNA polymerase activity that can copy either DNA or RNA templates, and a ribonuclease H (RNase H) activity that cleaves the RNA strand of RNA-DNA heteroduplexes in a partially processive 3' to 5' endonucleasic mode. Conversion of viral genomic RNA into dsDNA requires many steps. A tRNA(3)-Lys binds to the primer-binding site (PBS) situated at the 5'-end of the viral RNA. RT uses the 3' end of the tRNA primer to perform a short round of RNA-dependent minus-strand DNA synthesis. The reading proceeds through the U5 region and ends after the repeated (R) region which is present at both ends of viral RNA. The portion of the RNA-DNA heteroduplex is digested by the RNase H, resulting in a ssDNA product attached to the tRNA primer. This ssDNA/tRNA hybridizes with the identical R region situated at the 3' end of viral RNA. This template exchange, known as minus-strand DNA strong stop transfer, can be either intra- or intermolecular. RT uses the 3' end of this newly synthesized short ssDNA to perform the RNA-dependent minus-strand DNA synthesis of the whole template. RNase H digests the RNA template except for two polypurine tracts (PPTs) situated at the 5'-end and near the center of the genome. It is not clear if both polymerase and RNase H activities are simultaneous. RNase H probably can proceed both in a polymerase-dependent (RNA cut into small fragments by the same RT performing DNA synthesis) and a polymerase-independent mode (cleavage of remaining RNA fragments by free RTs). Secondly, RT performs DNA-directed plus-strand DNA synthesis using the PPTs that have not been removed by RNase H as primers. PPTs and tRNA primers are then removed by RNase H. The 3' and 5' ssDNA PBS regions hybridize to form a circular dsDNA intermediate. Strand displacement synthesis by RT to the PBS and PPT ends produces a blunt ended, linear dsDNA copy of the viral genome that includes long terminal repeats (LTRs) at both ends. In terms of biological role, catalyzes viral DNA integration into the host chromosome, by performing a series of DNA cutting and joining reactions. This enzyme activity takes place after virion entry into a cell and reverse transcription of the RNA genome in dsDNA. The first step in the integration process is 3' processing. This step requires a complex comprising the viral genome, matrix protein, Vpr and integrase. This complex is called the pre-integration complex (PIC). The integrase protein removes 2 nucleotides from each 3' end of the viral DNA, leaving recessed CA OH's at the 3' ends. In the second step, the PIC enters cell nucleus. This process is mediated through integrase and Vpr proteins, and allows the virus to infect a non dividing cell. This ability to enter the nucleus is specific of lentiviruses, other retroviruses cannot and rely on cell division to access cell chromosomes. In the third step, termed strand transfer, the integrase protein joins the previously processed 3' ends to the 5' ends of strands of target cellular DNA at the site of integration. The 5'-ends are produced by integrase-catalyzed staggered cuts, 5 bp apart. A Y-shaped, gapped, recombination intermediate results, with the 5'-ends of the viral DNA strands and the 3' ends of target DNA strands remaining unjoined, flanking a gap of 5 bp. The last step is viral DNA integration into host chromosome. This involves host DNA repair synthesis in which the 5 bp gaps between the unjoined strands are filled in and then ligated. Since this process occurs at both cuts flanking the HIV genome, a 5 bp duplication of host DNA is produced at the ends of HIV-1 integration. Alternatively, Integrase may catalyze the excision of viral DNA just after strand transfer, this is termed disintegration. The chain is Gag-Pol polyprotein (gag-pol) from Human immunodeficiency virus type 2 subtype B (isolate UC1) (HIV-2).